The chain runs to 522 residues: Apolipoprotein N-acyltransferase (522 aa).

6 consecutive transmembrane segments (helical) span residues 17-37 (YFTY…FSPF), 61-81 (TALL…VSWL), 98-118 (FLVG…TYLV), 127-147 (VIFA…FTGF), 164-184 (IAPI…SAVI), and 197-217 (LKLV…SAYS). The 248-residue stretch at 236-483 (AQGNIEQNLK…ETTLTYKIAP (248 aa)) folds into the CN hydrolase domain. Residue E276 is the Proton acceptor of the active site. Residue K342 is part of the active site. The Nucleophile role is filled by C394. A helical transmembrane segment spans residues 495 to 515 (NMPLYALSLLFLLLHSMMAFI).

The protein belongs to the CN hydrolase family. Apolipoprotein N-acyltransferase subfamily.

The protein localises to the cell inner membrane. It carries out the reaction N-terminal S-1,2-diacyl-sn-glyceryl-L-cysteinyl-[lipoprotein] + a glycerophospholipid = N-acyl-S-1,2-diacyl-sn-glyceryl-L-cysteinyl-[lipoprotein] + a 2-acyl-sn-glycero-3-phospholipid + H(+). The protein operates within protein modification; lipoprotein biosynthesis (N-acyl transfer). Its function is as follows. Catalyzes the phospholipid dependent N-acylation of the N-terminal cysteine of apolipoprotein, the last step in lipoprotein maturation. The protein is Apolipoprotein N-acyltransferase of Haemophilus influenzae (strain ATCC 51907 / DSM 11121 / KW20 / Rd).